The following is a 202-amino-acid chain: Small ribosomal subunit protein uS4 (202 aa).

An S4 RNA-binding domain is found at 91 to 168; sequence SRLSSVLYNS…QKVPDYLEVD (78 aa).

Belongs to the universal ribosomal protein uS4 family. In terms of assembly, part of the 30S ribosomal subunit. Contacts protein S5. The interaction surface between S4 and S5 is involved in control of translational fidelity.

Functionally, one of the primary rRNA binding proteins, it binds directly to 16S rRNA where it nucleates assembly of the body of the 30S subunit. With S5 and S12 plays an important role in translational accuracy. The sequence is that of Small ribosomal subunit protein uS4 from Ehrlichia chaffeensis (strain ATCC CRL-10679 / Arkansas).